Reading from the N-terminus, the 262-residue chain is Acetylglutamate kinase (262 aa).

Residues 46–47, arginine 68, and asparagine 160 each bind substrate; that span reads GG.

This sequence belongs to the acetylglutamate kinase family. ArgB subfamily.

It is found in the cytoplasm. The catalysed reaction is N-acetyl-L-glutamate + ATP = N-acetyl-L-glutamyl 5-phosphate + ADP. It participates in amino-acid biosynthesis; L-arginine biosynthesis; N(2)-acetyl-L-ornithine from L-glutamate: step 2/4. Its function is as follows. Catalyzes the ATP-dependent phosphorylation of N-acetyl-L-glutamate. The polypeptide is Acetylglutamate kinase (Shewanella amazonensis (strain ATCC BAA-1098 / SB2B)).